A 397-amino-acid polypeptide reads, in one-letter code: Odorant receptor 59a (397 aa).

At Met1–Tyr36 the chain is on the cytoplasmic side. Residues Val37–Ile57 form a helical membrane-spanning segment. Residues Ser58–Asp68 lie on the Extracellular side of the membrane. Asn62 carries an N-linked (GlcNAc...) asparagine glycan. Residues Ile69–Ile92 traverse the membrane as a helical segment. The Cytoplasmic portion of the chain corresponds to Lys93 to Val128. The helical transmembrane segment at Leu129 to Phe149 threads the bilayer. Topologically, residues Lys150–Gln179 are extracellular. Residues Ile180–Val200 traverse the membrane as a helical segment. Over Leu201–Leu274 the chain is Cytoplasmic. A helical transmembrane segment spans residues Ile275–Val295. The Extracellular segment spans residues Ser296–Arg301. A helical transmembrane segment spans residues Met302–Gly322. The Cytoplasmic segment spans residues Thr323–Arg372. Residues Ile373–Ile393 traverse the membrane as a helical segment. At Arg394–Lys397 the chain is on the extracellular side.

This sequence belongs to the insect chemoreceptor superfamily. Heteromeric odorant receptor channel (TC 1.A.69) family. Or2a subfamily. Interacts with Orco. Complexes exist early in the endomembrane system in olfactory sensory neurons (OSNs), coupling these complexes to the conserved ciliary trafficking pathway. Expressed in neurons of the third antennal segment.

It is found in the cell membrane. In terms of biological role, odorant receptor which mediates acceptance or avoidance behavior, depending on its substrates. The odorant receptor repertoire encodes a large collection of odor stimuli that vary widely in identity, intensity, and duration. May form a complex with Orco to form odorant-sensing units, providing sensitive and prolonged odorant signaling and calcium permeability. Involved in the behavioral responses to ethyl acetate, anisole, hexanoic acid, and pyrazines. The protein is Odorant receptor 59a (Or59a) of Drosophila melanogaster (Fruit fly).